The sequence spans 179 residues: Segregation and condensation protein B (179 aa).

This sequence belongs to the ScpB family. In terms of assembly, homodimer. Homodimerization may be required to stabilize the binding of ScpA to the Smc head domains. Component of a cohesin-like complex composed of ScpA, ScpB and the Smc homodimer, in which ScpA and ScpB bind to the head domain of Smc. The presence of the three proteins is required for the association of the complex with DNA.

The protein resides in the cytoplasm. In terms of biological role, participates in chromosomal partition during cell division. May act via the formation of a condensin-like complex containing Smc and ScpA that pull DNA away from mid-cell into both cell halves. This chain is Segregation and condensation protein B, found in Streptococcus equi subsp. equi (strain 4047).